Here is a 125-residue protein sequence, read N- to C-terminus: UPF0231 protein APP7_1023 (125 aa).

The protein belongs to the UPF0231 family.

The polypeptide is UPF0231 protein APP7_1023 (Actinobacillus pleuropneumoniae serotype 7 (strain AP76)).